The primary structure comprises 257 residues: Cytochrome b561 domain-containing protein At2g30890 (257 aa).

The N-terminal stretch at 1-21 is a signal peptide; sequence MEIHHQLLVSLLFLLLPLCSS. A Cytochrome b561 domain is found at 22-219; the sequence is QENTRSLAID…LFQDKWSYIQ (198 aa). A run of 5 helical transmembrane segments spans residues 55 to 75, 91 to 111, 125 to 145, 157 to 177, and 191 to 211; these read VHGFMLWAAMGVLMPIGIISI, LFFLHVTSQMVAVILVTIGAV, HQQLGIGLYVIVWFQALLGFL, WFVGHWILGTSIAILGIINIY, and ANLWTILFTAQLSCIALVYLF. Residues histidine 56, histidine 95, histidine 125, and histidine 161 each coordinate heme b. Residues 235-257 form a disordered region; it reads NISTAETGHGYEVEESKPELEKC. Basic and acidic residues predominate over residues 243 to 257; it reads HGYEVEESKPELEKC.

Heme b is required as a cofactor.

The protein resides in the membrane. This is Cytochrome b561 domain-containing protein At2g30890 from Arabidopsis thaliana (Mouse-ear cress).